Reading from the N-terminus, the 160-residue chain is SsrA-binding protein (160 aa).

Belongs to the SmpB family.

Its subcellular location is the cytoplasm. Functionally, required for rescue of stalled ribosomes mediated by trans-translation. Binds to transfer-messenger RNA (tmRNA), required for stable association of tmRNA with ribosomes. tmRNA and SmpB together mimic tRNA shape, replacing the anticodon stem-loop with SmpB. tmRNA is encoded by the ssrA gene; the 2 termini fold to resemble tRNA(Ala) and it encodes a 'tag peptide', a short internal open reading frame. During trans-translation Ala-aminoacylated tmRNA acts like a tRNA, entering the A-site of stalled ribosomes, displacing the stalled mRNA. The ribosome then switches to translate the ORF on the tmRNA; the nascent peptide is terminated with the 'tag peptide' encoded by the tmRNA and targeted for degradation. The ribosome is freed to recommence translation, which seems to be the essential function of trans-translation. The sequence is that of SsrA-binding protein from Shewanella amazonensis (strain ATCC BAA-1098 / SB2B).